Consider the following 301-residue polypeptide: Quinolinate synthase (301 aa).

Residues H21 and S38 each coordinate iminosuccinate. C83 contributes to the [4Fe-4S] cluster binding site. Iminosuccinate-binding positions include Y109–N111 and S126. C169 lines the [4Fe-4S] cluster pocket. Residues H195–E197 and T212 each bind iminosuccinate. C257 serves as a coordination point for [4Fe-4S] cluster.

It belongs to the quinolinate synthase family. Type 2 subfamily. [4Fe-4S] cluster is required as a cofactor.

It is found in the cytoplasm. It carries out the reaction iminosuccinate + dihydroxyacetone phosphate = quinolinate + phosphate + 2 H2O + H(+). It functions in the pathway cofactor biosynthesis; NAD(+) biosynthesis; quinolinate from iminoaspartate: step 1/1. In terms of biological role, catalyzes the condensation of iminoaspartate with dihydroxyacetone phosphate to form quinolinate. The polypeptide is Quinolinate synthase (Clostridium perfringens (strain 13 / Type A)).